The primary structure comprises 48 residues: ATP synthase protein 8 (48 aa).

At Met-1 the chain carries N-formylmethionine. The Mitochondrial intermembrane segment spans residues 1–12 (MPQLIPFFFLNQ). The chain crosses the membrane as a helical span at residues 13–33 (LFYGYLALFALLVLVSWVILP). Topologically, residues 34–48 (YLLQLQIVRLLITKL) are mitochondrial matrix.

In terms of assembly, F-type ATP synthases have 2 components, the catalytic core F(1) and the membrane-embedded component F(0), linked together by a central stalk and a peripheral stalk. The central stalk, also called rotor shaft, is often seen as part of F(1). The peripheral stalk is seen as part of F(0). F(0) contains the membrane channel next to the rotor. F-type ATP synthases form dimers but each monomer functions independently in ATP generation. The dimer consists of 18 different polypeptides: ATP1 (subunit alpha, part of F(1), 3 molecules per monomer), ATP2 (subunit beta, part of F(1), 3 molecules per monomer), ATP3 (subunit gamma, part of the central stalk), ATP4 (subunit b, part of the peripheral stalk), ATP5/OSCP (subunit 5/OSCP, part of the peripheral stalk), ATP6 (subunit a, part of the peripheral stalk), ATP7 (subunit d, part of the peripheral stalk), ATP8 (subunit 8, part of the peripheral stalk), OLI1 (subunit c, part of the rotor, 10 molecules per monomer), ATP14 (subunit h, part of the peripheral stalk), ATP15 (subunit epsilon, part of the central stalk), ATP16 (subunit delta, part of the central stalk), ATP17 (subunit f, part of the peripheral stalk), ATP18 (subunit i/j, part of the peripheral stalk). Dimer-specific subunits are ATP19 (subunit k, at interface between monomers), ATP20 (subunit g, at interface between monomers), TIM11 (subunit e, at interface between monomers). Also contains subunit L.

It is found in the mitochondrion inner membrane. Its function is as follows. Mitochondrial membrane ATP synthase (F(1)F(0) ATP synthase or Complex V) produces ATP from ADP in the presence of a proton gradient across the membrane which is generated by electron transport complexes of the respiratory chain. F-type ATP synthases consist of two structural domains, F(1) - containing the extramembraneous catalytic core, and F(0) - containing the membrane proton channel, linked together by a central stalk and a peripheral stalk. During catalysis, ATP synthesis in the catalytic domain of F(1) is coupled via a rotary mechanism of the central stalk subunits to proton translocation. Part of the complex F(0) domain. Minor subunit located with subunit a/ATP6 in the membrane. This chain is ATP synthase protein 8, found in Pichia angusta (Yeast).